The sequence spans 222 residues: uncharacterized protein (222 aa).

This is an uncharacterized protein from Archaeoglobus fulgidus (strain ATCC 49558 / DSM 4304 / JCM 9628 / NBRC 100126 / VC-16).